The chain runs to 452 residues: Pentatricopeptide repeat-containing protein At2g30780 (452 aa).

PPR repeat units follow at residues 137 to 171 (TASV…THCA), 173 to 207 (TVVT…KLPP), 208 to 242 (NSVT…PVEP), 243 to 273 (DTDT…IKDQ), 350 to 384 (KSSI…GWKL), 385 to 419 (CRSL…NYGL), and 420 to 452 (VTKT…KRGL).

The protein belongs to the PPR family. P subfamily.

This is Pentatricopeptide repeat-containing protein At2g30780 from Arabidopsis thaliana (Mouse-ear cress).